The primary structure comprises 639 residues: Exocyst complex component EXO70E2 (639 aa).

It belongs to the EXO70 family. As to quaternary structure, component of the exocyst complex and of the exocyst-positive organelle (EXPO). Interacts with SEC6, SEC10A and SEC10B. As to expression, expressed in roots, in the root-hair zone, both in root hair and nonhair cells.

It is found in the secreted. Its subcellular location is the extracellular exosome. The protein resides in the cell membrane. It localises to the cytoplasm. The protein localises to the endomembrane system. Functionally, influences the subcellular localization patterns of other exocyst complex proteins (e.g. SEC5A, SEC15A, SEC15B and EXO84B) leading to their recruitment to exocyst, well-defined large punctate structures throughout the cytosol. Essential component for the formation and the recruitment of exocyst subunits to the exocyst-positive organelle (EXPO), a secreted double membrane structure also called extracellular exosome, that acts as a sequester for cytosolic proteins to release them into the apoplast. The chain is Exocyst complex component EXO70E2 from Arabidopsis thaliana (Mouse-ear cress).